The following is a 426-amino-acid chain: GATA type zinc finger protein asd-4 (426 aa).

The GATA-type zinc finger occupies 16–40; sequence CQNCATSTTPLWRRDEMGQVLCNAC. Disordered regions lie at residues 70–143 and 159–178; these read RPDL…NPHI and PGFG…MNGE. The span at 104 to 113 shows a compositional bias: low complexity; that stretch reads PNNPAAAARR. Residues 128 to 138 are compositionally biased toward polar residues; it reads SPVSRTGTPNV. Residues 182 to 292 adopt a coiled-coil conformation; sequence QTHEQLLAAN…QDNGRHKKIR (111 aa). Positions 306 to 318 are enriched in low complexity; the sequence is VEPQQPEQQQPAP. The disordered stretch occupies residues 306 to 426; the sequence is VEPQQPEQQQ…PVEEAPKAES (121 aa). Positions 335–353 are enriched in pro residues; it reads APAPAPEAAPEQAPAPAPE. Over residues 354 to 419 the composition is skewed to low complexity; it reads PVQEQAQEPE…SEPPTTAPVE (66 aa).

Homotetramer.

It is found in the nucleus. In terms of biological role, transcriptional regulator that functions in sexual development; disruption of asd-4 gene results in agenesis of ascus and ascospore with macroscopically normal fruiting body formation. The GATA-type zinc finger domain binds to DNA sequences from its own promoter region. This Neurospora crassa (strain ATCC 24698 / 74-OR23-1A / CBS 708.71 / DSM 1257 / FGSC 987) protein is GATA type zinc finger protein asd-4 (asd-4).